Reading from the N-terminus, the 405-residue chain is S-adenosylmethionine synthase (405 aa).

Residue 141-146 (GQGSVD) coordinates ATP.

The protein belongs to the AdoMet synthase 2 family. Requires Mg(2+) as cofactor.

The enzyme catalyses L-methionine + ATP + H2O = S-adenosyl-L-methionine + phosphate + diphosphate. It participates in amino-acid biosynthesis; S-adenosyl-L-methionine biosynthesis; S-adenosyl-L-methionine from L-methionine: step 1/1. Its function is as follows. Catalyzes the formation of S-adenosylmethionine from methionine and ATP. In Methanococcus maripaludis (strain C7 / ATCC BAA-1331), this protein is S-adenosylmethionine synthase.